Reading from the N-terminus, the 491-residue chain is Glutamyl-tRNA(Gln) amidotransferase subunit A (491 aa).

Catalysis depends on charge relay system residues Lys80 and Ser155. The Acyl-ester intermediate role is filled by Ser179.

The protein belongs to the amidase family. GatA subfamily. In terms of assembly, heterotrimer of A, B and C subunits.

It carries out the reaction L-glutamyl-tRNA(Gln) + L-glutamine + ATP + H2O = L-glutaminyl-tRNA(Gln) + L-glutamate + ADP + phosphate + H(+). Its function is as follows. Allows the formation of correctly charged Gln-tRNA(Gln) through the transamidation of misacylated Glu-tRNA(Gln) in organisms which lack glutaminyl-tRNA synthetase. The reaction takes place in the presence of glutamine and ATP through an activated gamma-phospho-Glu-tRNA(Gln). This is Glutamyl-tRNA(Gln) amidotransferase subunit A from Salinispora tropica (strain ATCC BAA-916 / DSM 44818 / JCM 13857 / NBRC 105044 / CNB-440).